The primary structure comprises 403 residues: Dynactin subunit 2-A (403 aa).

The segment at 1-26 (MADPKYADLPGIARNEPDVYETSDLP) is disordered. Positions 99-132 (PQQKYQRLLHEVQELTQEVEKTQSTVKESAAEEK) form a coiled coil. The disordered stretch occupies residues 183–203 (AAKTRKNPEGKSPAKGPGPDT). The stretch at 381–401 (KENLATVEDNFSNIDGRIKKL) forms a coiled coil.

The protein belongs to the dynactin subunit 2 family. As to quaternary structure, subunit of dynactin, a multiprotein complex part of a tripartite complex with dynein and a adapter, such as BICDL1, BICD2 or HOOK3. The dynactin complex is built around ACTR1A/ACTB filament and consists of an actin-related filament composed of a shoulder domain, a pointed end and a barbed end. Its length is defined by its flexible shoulder domain. The soulder is composed of 2 DCTN1 subunits, 4 DCTN2 and 2 DCTN3.

It localises to the cytoplasm. Its subcellular location is the cytoskeleton. The protein resides in the microtubule organizing center. The protein localises to the centrosome. It is found in the membrane. Its function is as follows. Part of the dynactin complex that activates the molecular motor dynein for ultra-processive transport along microtubules. In the dynactin soulder domain, binds the ACTR1A filament and acts as a molecular ruler to determine the length. Modulates cytoplasmic dynein binding to an organelle, and plays a role in prometaphase chromosome alignment and spindle organization during mitosis. Involved in anchoring microtubules to centrosomes. The sequence is that of Dynactin subunit 2-A (dctn2-a) from Xenopus laevis (African clawed frog).